Reading from the N-terminus, the 49-residue chain is uncharacterized protein (49 aa).

This is an uncharacterized protein from Escherichia coli (Bacteriophage T4).